We begin with the raw amino-acid sequence, 284 residues long: MGQPWAAGSTDGAPAQLPLVLTALWAAAVGLELAYVLVLGPGPPPLGPLARALQLALAAFQLLNLLGNVGLFLRSDPSIRGVMLAGRGLGQGWAYCYQCQSQVPPRSGHCSACRVCILRRDHHCRLLGRCVGFGNYRPFLCLLLHAAGVLLHVSVLLGPALSALLRAHTPLHMAALLLLPWLMLLTGRVSLAQFALAFVTDTCVAGALLCGAGLLFHGMLLLRGQTTWEWARGQHSYDLGPCHNLQAALGPRWALVWLWPFLASPLPGDGITFQTTADVGHTAS.

Residues 1–18 lie on the Cytoplasmic side of the membrane; the sequence is MGQPWAAGSTDGAPAQLP. The helical transmembrane segment at 19-39 threads the bilayer; that stretch reads LVLTALWAAAVGLELAYVLVL. The Extracellular portion of the chain corresponds to 40-52; sequence GPGPPPLGPLARA. The helical transmembrane segment at 53-73 threads the bilayer; that stretch reads LQLALAAFQLLNLLGNVGLFL. Residues 74–137 lie on the Cytoplasmic side of the membrane; the sequence is RSDPSIRGVM…GRCVGFGNYR (64 aa). Residues 94-144 form the DHHC domain; sequence AYCYQCQSQVPPRSGHCSACRVCILRRDHHCRLLGRCVGFGNYRPFLCLLL. C124 (S-palmitoyl cysteine intermediate) is an active-site residue. A helical membrane pass occupies residues 138 to 158; it reads PFLCLLLHAAGVLLHVSVLLG. Residues 159 to 166 are Extracellular-facing; that stretch reads PALSALLR. Residues 167 to 187 traverse the membrane as a helical segment; the sequence is AHTPLHMAALLLLPWLMLLTG. Residues 188–201 lie on the Cytoplasmic side of the membrane; that stretch reads RVSLAQFALAFVTD. A helical membrane pass occupies residues 202–222; that stretch reads TCVAGALLCGAGLLFHGMLLL. At 223 to 284 the chain is on the extracellular side; sequence RGQTTWEWAR…TTADVGHTAS (62 aa).

It belongs to the DHHC palmitoyltransferase family.

Its subcellular location is the membrane. The enzyme catalyses L-cysteinyl-[protein] + hexadecanoyl-CoA = S-hexadecanoyl-L-cysteinyl-[protein] + CoA. Functionally, probable palmitoyltransferase that could catalyze the addition of palmitate onto various protein substrates. This is Probable palmitoyltransferase ZDHHC24 from Homo sapiens (Human).